The sequence spans 238 residues: Uridylate kinase (238 aa).

12-15 provides a ligand contact to ATP; it reads KLSG. The interval 20–25 is involved in allosteric activation by GTP; that stretch reads GEKGFG. Residue Gly54 participates in UMP binding. Gly55 and Arg59 together coordinate ATP. Residues Asp72 and 133-140 each bind UMP; that span reads TGNPYFST. Residues Tyr166 and Asp169 each contribute to the ATP site.

Belongs to the UMP kinase family. Homohexamer.

The protein resides in the cytoplasm. It catalyses the reaction UMP + ATP = UDP + ADP. Its pathway is pyrimidine metabolism; CTP biosynthesis via de novo pathway; UDP from UMP (UMPK route): step 1/1. Allosterically activated by GTP. Inhibited by UTP. Functionally, catalyzes the reversible phosphorylation of UMP to UDP. This is Uridylate kinase from Clostridium botulinum (strain Langeland / NCTC 10281 / Type F).